The primary structure comprises 358 residues: 3-dehydroquinate synthase (358 aa).

NAD(+) is bound by residues 102–106 (GVVGD), 126–127 (TT), Lys-138, and Lys-147. Zn(2+) is bound by residues Glu-180, His-243, and His-260.

It belongs to the sugar phosphate cyclases superfamily. Dehydroquinate synthase family. Requires Co(2+) as cofactor. Zn(2+) is required as a cofactor. NAD(+) serves as cofactor.

The protein resides in the cytoplasm. The catalysed reaction is 7-phospho-2-dehydro-3-deoxy-D-arabino-heptonate = 3-dehydroquinate + phosphate. It functions in the pathway metabolic intermediate biosynthesis; chorismate biosynthesis; chorismate from D-erythrose 4-phosphate and phosphoenolpyruvate: step 2/7. Catalyzes the conversion of 3-deoxy-D-arabino-heptulosonate 7-phosphate (DAHP) to dehydroquinate (DHQ). This Shouchella clausii (strain KSM-K16) (Alkalihalobacillus clausii) protein is 3-dehydroquinate synthase.